The primary structure comprises 66 residues: Toxin Boma6e (66 aa).

One can recognise an LCN-type CS-alpha/beta domain in the interval 2 to 64 (RDAYIAQNYN…VPLKVQGKCH (63 aa)). Intrachain disulfides connect C12-C63, C22-C46, and C26-C48.

This sequence belongs to the long (3 C-C) scorpion toxin superfamily. Only three disulfide bridges can be formed, because only seven cysteines are present. Expressed by the venom gland.

It is found in the secreted. Its function is as follows. Binds voltage-independently at site-3 of sodium channels (Nav) and inhibits the inactivation of the activated channels, thereby blocking neuronal transmission. This chain is Toxin Boma6e, found in Buthus occitanus mardochei (Moroccan scorpion).